The chain runs to 51 residues: Methionine aminopeptidase (51 aa).

This sequence belongs to the peptidase M24A family. Methionine aminopeptidase type 1 subfamily. Monomer. Co(2+) is required as a cofactor. Requires Zn(2+) as cofactor. The cofactor is Mn(2+). It depends on Fe(2+) as a cofactor.

It catalyses the reaction Release of N-terminal amino acids, preferentially methionine, from peptides and arylamides.. In terms of biological role, removes the N-terminal methionine from nascent proteins. The N-terminal methionine is often cleaved when the second residue in the primary sequence is small and uncharged (Met-Ala-, Cys, Gly, Pro, Ser, Thr, or Val). Requires deformylation of the N(alpha)-formylated initiator methionine before it can be hydrolyzed. The polypeptide is Methionine aminopeptidase (map) (Geobacillus stearothermophilus (Bacillus stearothermophilus)).